Reading from the N-terminus, the 273-residue chain is SPRY domain-containing SOCS box protein 1 (273 aa).

Tyrosine 31 carries the post-translational modification Phosphotyrosine. A B30.2/SPRY domain is found at lysine 33 to aspartate 231. The region spanning proline 232–glutamine 273 is the SOCS box domain.

It belongs to the SPSB family. As to quaternary structure, component of the probable ECS(SPSB1) E3 ubiquitin-protein ligase complex which contains CUL5, RNF7/RBX2, Elongin BC complex and SPSB1. Interacts with CUL5, RNF7, ELOB and ELOC. Directly interacts with MET tyrosine kinase domain in the presence and in the absence of HGF, however HGF treatment has a positive effect on this interaction. When phosphorylated, interacts with RASA1 without affecting its stability. Interacts (via B30.2/SPRY domain) with PAWR; this interaction is direct and occurs in association with the Elongin BC complex. Interacts with NOS2 and EPHB2.

It localises to the cytoplasm. The protein localises to the cytosol. The protein operates within protein modification; protein ubiquitination. Substrate recognition component of a SCF-like ECS (Elongin BC-CUL2/5-SOCS-box protein) E3 ubiquitin-protein ligase complex which mediates the ubiquitination and subsequent proteasomal degradation of target proteins. Negatively regulates nitric oxide (NO) production and limits cellular toxicity in activated macrophages by mediating the ubiquitination and proteasomal degradation of NOS2. Acts as a bridge which links NOS2 with the ECS E3 ubiquitin ligase complex components ELOC and CUL5. The protein is SPRY domain-containing SOCS box protein 1 (SPSB1) of Bos taurus (Bovine).